The chain runs to 1053 residues: Probable dihydropyrimidine dehydrogenase [NADP(+)] (1053 aa).

A 4Fe-4S ferredoxin-type 1 domain is found at 84–115; that stretch reads ERGALKEAMRCLKCADAPCQKSCPTQLDIKSF. [4Fe-4S] cluster-binding residues include cysteine 94, cysteine 97, cysteine 102, cysteine 106, cysteine 145, cysteine 151, cysteine 155, and glutamine 171. Residues 207 to 211, 231 to 239, arginine 248, and leucine 274 contribute to the FAD site; these read GCGPA and EKRAYIGGL. NADP(+) contacts are provided by residues 354–357, 378–379, arginine 385, 451–453, and 495–501; these read AGDT, RK, AFG, and DVAGVAE. 494-503 contacts FAD; it reads GDVAGVAETT. Residues serine 574 and 598–599 contribute to the FMN site; that span reads KT. Residues asparagine 633 and 692-694 each bind substrate; that span reads NLS. Cysteine 695 functions as the Proton acceptor in the catalytic mechanism. Residue lysine 733 coordinates FMN. Residue 760-761 participates in substrate binding; the sequence is NT. FMN contacts are provided by residues glycine 791, 817–819, and 840–841; these read TGG and CS. 4Fe-4S ferredoxin-type domains lie at 949 to 981 and 983 to 1013; these read EVAIIDHDMCINCGKCYMTCNDSGYQAITFDAV and HQPHVTEDDCTGCTLCYSVCPIPECIQMVPR. [4Fe-4S] cluster contacts are provided by cysteine 958, cysteine 961, cysteine 964, cysteine 968, cysteine 992, cysteine 995, cysteine 998, and cysteine 1002.

The protein belongs to the dihydropyrimidine dehydrogenase family. It depends on [4Fe-4S] cluster as a cofactor. Requires FAD as cofactor. FMN is required as a cofactor.

It carries out the reaction 5,6-dihydrouracil + NADP(+) = uracil + NADPH + H(+). Its pathway is amino-acid biosynthesis; beta-alanine biosynthesis. In terms of biological role, involved in pyrimidine base degradation. Catalyzes the reduction of uracil and thymine. Also involved the degradation of the chemotherapeutic drug 5-fluorouracil. The polypeptide is Probable dihydropyrimidine dehydrogenase [NADP(+)] (Caenorhabditis briggsae).